An 89-amino-acid chain; its full sequence is MSLSAETKAKILADFGRCENDTGSTEVQVALLTAQINHLQGHFKEHIHDHHSRRGLLRMVSARRKLSAYLKRTDVARYTAMIQKLGLRR.

The protein belongs to the universal ribosomal protein uS15 family. Part of the 30S ribosomal subunit. Forms a bridge to the 50S subunit in the 70S ribosome, contacting the 23S rRNA.

Functionally, one of the primary rRNA binding proteins, it binds directly to 16S rRNA where it helps nucleate assembly of the platform of the 30S subunit by binding and bridging several RNA helices of the 16S rRNA. Forms an intersubunit bridge (bridge B4) with the 23S rRNA of the 50S subunit in the ribosome. The sequence is that of Small ribosomal subunit protein uS15 from Shewanella frigidimarina (strain NCIMB 400).